We begin with the raw amino-acid sequence, 491 residues long: Monodehydroascorbate reductase 5, chlorplastic (491 aa).

The transit peptide at 1–42 (MASTAAAASSQGCISWALRQRGLGGGGARAVPVLPRRRFCVS) directs the protein to the chloroplast. Residues 61 to 64 (GGNA), Glu-88, Arg-95, Lys-100, and 194 to 195 (RD) contribute to the FAD site. Residues 217–223 (GGYIGME), Glu-241, Arg-247, and Gly-306 each bind NAD(+). NADP(+) is bound at residue 219–223 (YIGME). Residues Arg-247 and Gly-306 each contribute to the NADP(+) site. Position 344 (Asp-344) interacts with FAD. NAD(+) is bound at residue 360–361 (EH). 360–361 (EH) is a binding site for NADP(+). An FAD-binding site is contributed by Val-362. Arg-366 contributes to the L-ascorbate binding site. Tyr-391 contacts FAD. Tyr-391 contributes to the NAD(+) binding site. NADP(+) is bound at residue Tyr-391. Arg-393 lines the L-ascorbate pocket.

It belongs to the FAD-dependent oxidoreductase family. Requires FAD as cofactor.

The protein localises to the plastid. It is found in the chloroplast. The enzyme catalyses 2 monodehydro-L-ascorbate radical + NADH + H(+) = 2 L-ascorbate + NAD(+). In terms of biological role, catalyzes the conversion of monodehydroascorbate to ascorbate, oxidizing NADH in the process. Ascorbate is a major antioxidant against reactive oxygen species (ROS) and nitric oxide (NO). In Oryza sativa subsp. japonica (Rice), this protein is Monodehydroascorbate reductase 5, chlorplastic.